The following is a 73-amino-acid chain: Cytochrome b559 subunit alpha (73 aa).

A helical transmembrane segment spans residues 21-35 (IIHSITVPSLFIAGW). His23 provides a ligand contact to heme.

This sequence belongs to the PsbE/PsbF family. As to quaternary structure, heterodimer of an alpha subunit and a beta subunit. PSII is composed of 1 copy each of membrane proteins PsbA, PsbB, PsbC, PsbD, PsbE, PsbF, PsbH, PsbI, PsbJ, PsbK, PsbL, PsbM, PsbT, PsbY, PsbZ, Psb30/Ycf12, at least 3 peripheral proteins of the oxygen-evolving complex and a large number of cofactors. It forms dimeric complexes. Heme b is required as a cofactor.

The protein resides in the plastid. The protein localises to the chloroplast thylakoid membrane. This b-type cytochrome is tightly associated with the reaction center of photosystem II (PSII). PSII is a light-driven water:plastoquinone oxidoreductase that uses light energy to abstract electrons from H(2)O, generating O(2) and a proton gradient subsequently used for ATP formation. It consists of a core antenna complex that captures photons, and an electron transfer chain that converts photonic excitation into a charge separation. This Bigelowiella natans (Pedinomonas minutissima) protein is Cytochrome b559 subunit alpha.